The following is a 239-amino-acid chain: Ribosomal RNA small subunit methyltransferase G (239 aa).

S-adenosyl-L-methionine-binding positions include Gly-80, Phe-85, 103 to 105, 131 to 132, and Arg-150; these read EAS and AE.

This sequence belongs to the methyltransferase superfamily. RNA methyltransferase RsmG family.

The protein localises to the cytoplasm. Specifically methylates the N7 position of a guanine in 16S rRNA. This chain is Ribosomal RNA small subunit methyltransferase G, found in Caldanaerobacter subterraneus subsp. tengcongensis (strain DSM 15242 / JCM 11007 / NBRC 100824 / MB4) (Thermoanaerobacter tengcongensis).